A 230-amino-acid polypeptide reads, in one-letter code: Phosphoribosylformylglycinamidine synthase subunit PurQ (230 aa).

Residues Lys2–Ile230 enclose the Glutamine amidotransferase type-1 domain. Cys85 (nucleophile) is an active-site residue. Active-site residues include His202 and Glu204.

Part of the FGAM synthase complex composed of 1 PurL, 1 PurQ and 2 PurS subunits.

Its subcellular location is the cytoplasm. The catalysed reaction is N(2)-formyl-N(1)-(5-phospho-beta-D-ribosyl)glycinamide + L-glutamine + ATP + H2O = 2-formamido-N(1)-(5-O-phospho-beta-D-ribosyl)acetamidine + L-glutamate + ADP + phosphate + H(+). It carries out the reaction L-glutamine + H2O = L-glutamate + NH4(+). The protein operates within purine metabolism; IMP biosynthesis via de novo pathway; 5-amino-1-(5-phospho-D-ribosyl)imidazole from N(2)-formyl-N(1)-(5-phospho-D-ribosyl)glycinamide: step 1/2. Functionally, part of the phosphoribosylformylglycinamidine synthase complex involved in the purines biosynthetic pathway. Catalyzes the ATP-dependent conversion of formylglycinamide ribonucleotide (FGAR) and glutamine to yield formylglycinamidine ribonucleotide (FGAM) and glutamate. The FGAM synthase complex is composed of three subunits. PurQ produces an ammonia molecule by converting glutamine to glutamate. PurL transfers the ammonia molecule to FGAR to form FGAM in an ATP-dependent manner. PurS interacts with PurQ and PurL and is thought to assist in the transfer of the ammonia molecule from PurQ to PurL. In Methanocaldococcus jannaschii (strain ATCC 43067 / DSM 2661 / JAL-1 / JCM 10045 / NBRC 100440) (Methanococcus jannaschii), this protein is Phosphoribosylformylglycinamidine synthase subunit PurQ.